Reading from the N-terminus, the 178-residue chain is Large ribosomal subunit protein uL6 (178 aa).

It belongs to the universal ribosomal protein uL6 family. In terms of assembly, part of the 50S ribosomal subunit.

Functionally, this protein binds to the 23S rRNA, and is important in its secondary structure. It is located near the subunit interface in the base of the L7/L12 stalk, and near the tRNA binding site of the peptidyltransferase center. This is Large ribosomal subunit protein uL6 from Geobacillus kaustophilus (strain HTA426).